Here is a 672-residue protein sequence, read N- to C-terminus: tRNA 5-methylaminomethyl-2-thiouridine biosynthesis bifunctional protein MnmC (672 aa).

Residues 1–235 form a tRNA (mnm(5)s(2)U34)-methyltransferase region; sequence MTRVLEPAEP…KRDMTVARFA (235 aa). Residues 259-672 form an FAD-dependent cmnm(5)s(2)U34 oxidoreductase region; the sequence is IGAGLAGCAV…SAGPGVDAAG (414 aa).

It in the N-terminal section; belongs to the methyltransferase superfamily. tRNA (mnm(5)s(2)U34)-methyltransferase family. This sequence in the C-terminal section; belongs to the DAO family. Requires FAD as cofactor.

It is found in the cytoplasm. It carries out the reaction 5-aminomethyl-2-thiouridine(34) in tRNA + S-adenosyl-L-methionine = 5-methylaminomethyl-2-thiouridine(34) in tRNA + S-adenosyl-L-homocysteine + H(+). In terms of biological role, catalyzes the last two steps in the biosynthesis of 5-methylaminomethyl-2-thiouridine (mnm(5)s(2)U) at the wobble position (U34) in tRNA. Catalyzes the FAD-dependent demodification of cmnm(5)s(2)U34 to nm(5)s(2)U34, followed by the transfer of a methyl group from S-adenosyl-L-methionine to nm(5)s(2)U34, to form mnm(5)s(2)U34. The protein is tRNA 5-methylaminomethyl-2-thiouridine biosynthesis bifunctional protein MnmC of Cupriavidus metallidurans (strain ATCC 43123 / DSM 2839 / NBRC 102507 / CH34) (Ralstonia metallidurans).